A 131-amino-acid chain; its full sequence is Small ribosomal subunit protein uS12 (131 aa).

D89 is subject to 3-methylthioaspartic acid. The segment at 106 to 131 (GVDGRKQGRSKYGAKKAKVAKTASAK) is disordered. The segment covering 112–124 (QGRSKYGAKKAKV) has biased composition (basic residues).

It belongs to the universal ribosomal protein uS12 family. In terms of assembly, part of the 30S ribosomal subunit. Contacts proteins S8 and S17. May interact with IF1 in the 30S initiation complex.

In terms of biological role, with S4 and S5 plays an important role in translational accuracy. Interacts with and stabilizes bases of the 16S rRNA that are involved in tRNA selection in the A site and with the mRNA backbone. Located at the interface of the 30S and 50S subunits, it traverses the body of the 30S subunit contacting proteins on the other side and probably holding the rRNA structure together. The combined cluster of proteins S8, S12 and S17 appears to hold together the shoulder and platform of the 30S subunit. This is Small ribosomal subunit protein uS12 from Endomicrobium trichonymphae.